The chain runs to 513 residues: MRLEVFCEDRLGLTRELLDLLVLRSIDLRGIEIDPIGRIYLNFAELEFTDFSSLMAEIRRISGVTDVRTVPWMPSEREHLALSALLEALPEPVLSLDMKSKVEMANPASCQLFAQSQERMRHHTAAQLINGFNFQRWLDGNPQSSHNEHVVINGQNFLMEITPVHLQNENDEYVLTGAVVMLRSTIRMGQQLQNLSTQDLSAFSQIIAVSAKMKHVVEQARKLAMLSAPLLITGDTGTGKDLFAYACHQASPRSAKPYLALNCASIPEDAVESELFGHAPEGKKGFFEQANGGSVLLDEIGEMSPRMQAKLLRFLNDGTFRRVGEDHEIHVDVRVICATQKNLVELVQKGLFREDLYYRLNVLTLNLPPLRDCPQDIMPLTELFVARFADEQGVPRPKLSADLSTVLTRYGWPGNVRQLKNAIYRALTQLEGYELRPQDILLPDYDAATVAVGEDAMEGSLDDITSRFERSVLTQLYRSYPSTRKLAKRLGVSHTAIANKLREYGLSQKKGEE.

Residues 2-72 form the ACT domain; sequence RLEVFCEDRL…GVTDVRTVPW (71 aa). In terms of domain architecture, PAS spans 78-120; it reads EHLALSALLEALPEPVLSLDMKSKVEMANPASCQLFAQSQERM. Residues 206 to 428 enclose the Sigma-54 factor interaction domain; that stretch reads IIAVSAKMKH…LKNAIYRALT (223 aa). Residues 234–241 and 290–299 each bind ATP; these read GDTGTGKD and ANGGSVLLDE. The H-T-H motif DNA-binding region spans 482-502; that stretch reads STRKLAKRLGVSHTAIANKLR.

Homodimer. In presence of tyrosine (or high concentrations of phenylalanine or tryptophan) and ATP, it self-associates to form an hexamer.

The protein localises to the cytoplasm. Its function is as follows. Dual transcriptional regulator of the TyrR regulon, which includes a number of genes coding for proteins involved in the biosynthesis or transport of the three aromatic amino acids, phenylalanine, tyrosine and tryptophan. These three aromatic amino acids act as effectors which bind to the TyrR protein to form an active regulatory protein. Acts by binding specifically to TyrR boxes in the promoter region of the target genes. The chain is HTH-type transcriptional regulatory protein TyrR (tyrR) from Salmonella typhi.